A 174-amino-acid polypeptide reads, in one-letter code: Shikimate kinase 2 (174 aa).

12 to 17 serves as a coordination point for ATP; that stretch reads GCGKTT. Mg(2+) is bound by residues Thr16 and Asp32. Positions 34, 58, and 79 each coordinate substrate. The interval 112 to 126 is LID domain; it reads QAAPEEDLRPTLTGK. ATP is bound at residue Arg120. Arg139 lines the substrate pocket.

Belongs to the shikimate kinase family. AroL subfamily. Monomer. Requires Mg(2+) as cofactor.

It localises to the cytoplasm. It carries out the reaction shikimate + ATP = 3-phosphoshikimate + ADP + H(+). It functions in the pathway metabolic intermediate biosynthesis; chorismate biosynthesis; chorismate from D-erythrose 4-phosphate and phosphoenolpyruvate: step 5/7. In terms of biological role, catalyzes the specific phosphorylation of the 3-hydroxyl group of shikimic acid using ATP as a cosubstrate. The polypeptide is Shikimate kinase 2 (Escherichia coli O81 (strain ED1a)).